The primary structure comprises 86 residues: Small ribosomal subunit protein bS20 (86 aa).

Residues 1–11 (MANIKSQKKRV) show a composition bias toward basic residues. Positions 1-20 (MANIKSQKKRVRTNEKAHQR) are disordered.

It belongs to the bacterial ribosomal protein bS20 family.

In terms of biological role, binds directly to 16S ribosomal RNA. This Bifidobacterium animalis subsp. lactis (strain AD011) protein is Small ribosomal subunit protein bS20.